Reading from the N-terminus, the 436-residue chain is Glutamyl-tRNA reductase (436 aa).

Substrate contacts are provided by residues 49-52, Ser109, 114-116, and Gln120; these read TCNR and EGQ. Cys50 functions as the Nucleophile in the catalytic mechanism. 198–203 contributes to the NADP(+) binding site; the sequence is GAGRMS.

Belongs to the glutamyl-tRNA reductase family. In terms of assembly, homodimer.

It carries out the reaction (S)-4-amino-5-oxopentanoate + tRNA(Glu) + NADP(+) = L-glutamyl-tRNA(Glu) + NADPH + H(+). It participates in porphyrin-containing compound metabolism; protoporphyrin-IX biosynthesis; 5-aminolevulinate from L-glutamyl-tRNA(Glu): step 1/2. Its pathway is porphyrin-containing compound metabolism; chlorophyll biosynthesis. In terms of biological role, catalyzes the NADPH-dependent reduction of glutamyl-tRNA(Glu) to glutamate 1-semialdehyde (GSA). The protein is Glutamyl-tRNA reductase of Prochlorococcus marinus (strain AS9601).